The chain runs to 176 residues: Disulfide bond formation protein B (176 aa).

Topologically, residues 1–11 (MLQLTTYRNLQ) are cytoplasmic. Residues 12–28 (VFLVIMTAIGMSFALFF) form a helical membrane-spanning segment. Over 29–46 (LQRYMGFSPCPLCIFQRI) the chain is Periplasmic. A disulfide bridge connects residues C38 and C41. Residues 47-63 (GLMIMGGFALIAALFHP) form a helical membrane-spanning segment. Residues 64 to 70 (KSMVIRL) lie on the Cytoplasmic side of the membrane. Residues 71-88 (LLWLGSLAGIGWAAIVAG) form a helical membrane-spanning segment. Residues 89 to 145 (RHVWLQHLPADQVPSCGPGLDYWLDTLPMQQVLKEVFAGSGECASIDWTFLGLSIPE) lie on the Periplasmic side of the membrane. A disulfide bond links C104 and C131. Residues 146–164 (QSLILFSILILTHLLILWR) form a helical membrane-spanning segment. At 165–176 (IVRPATPKPLAR) the chain is on the cytoplasmic side.

This sequence belongs to the DsbB family.

It is found in the cell inner membrane. In terms of biological role, required for disulfide bond formation in some periplasmic proteins. Acts by oxidizing the DsbA protein. This chain is Disulfide bond formation protein B, found in Psychrobacter cryohalolentis (strain ATCC BAA-1226 / DSM 17306 / VKM B-2378 / K5).